Here is a 508-residue protein sequence, read N- to C-terminus: MISTDSLARIALDLQLGISHQDRFHRLIQSVRSLLNSDASALLRYEGGQFIPLAIDGLMQDVLGRRFALKDHPRMEAIARAGDVVRFPADSSLPDPYDGLLPDHDDFKVHACVGLPLFSDQALIGALTIDGMNPTQFDAISDEELRLVGALAAAALNNALLLERLARQSSEPLVPGTRPGPEQPEMIGQSPAMARLRHEIEVVANSELNVLILGETGVGKELIAKAVHRGSQRAKAPLVYLNCAALPESVAESELFGHVKGAFTGAIHNRAGKFELADQGTLFLDEIGELSLPLQAKLLRVLQYGDLQRIGDDTPLKVNVRILAATNRDLKQAVVEGQFRADLYHRLSVFPIHAPALRERPGDIPLLAGYFCERCRLSLGLEQLRIQPQALQLLERHDWPGNVRELEHAIHRAAVLARAEQGSQTPTLASHHFNLAAGPLPPSTSPAMAPMTPLPGGLGLRAATDAFQLALIEQTLAAHNGNWAATARALELDSGNLHRLAKRLGLKA.

D56 bears the 4-aspartylphosphate mark. The Sigma-54 factor interaction domain maps to 186 to 415 (MIGQSPAMAR…LEHAIHRAAV (230 aa)). Residues 214 to 221 (GETGVGKE) and 277 to 286 (ADQGTLFLDE) contribute to the ATP site. Positions 483 to 502 (WAATARALELDSGNLHRLAK) form a DNA-binding region, H-T-H motif.

It functions in the pathway nitrogen metabolism; nitric oxide reduction. Its function is as follows. Required for the expression of anaerobic nitric oxide (NO) reductase, acts as a transcriptional activator for at least the norVW operon. Activation also requires sigma-54. The polypeptide is Anaerobic nitric oxide reductase transcription regulator NorR (Aeromonas hydrophila subsp. hydrophila (strain ATCC 7966 / DSM 30187 / BCRC 13018 / CCUG 14551 / JCM 1027 / KCTC 2358 / NCIMB 9240 / NCTC 8049)).